We begin with the raw amino-acid sequence, 375 residues long: Erythronate-4-phosphate dehydrogenase (375 aa).

Residues serine 45 and threonine 66 each contribute to the substrate site. Residues aspartate 146, threonine 175, alanine 206–arginine 208, and aspartate 232 contribute to the NAD(+) site. Arginine 208 is an active-site residue. Glutamate 237 is an active-site residue. The active-site Proton donor is the histidine 254. An NAD(+)-binding site is contributed by glycine 257. Substrate is bound at residue tyrosine 258.

The protein belongs to the D-isomer specific 2-hydroxyacid dehydrogenase family. PdxB subfamily. As to quaternary structure, homodimer.

Its subcellular location is the cytoplasm. The enzyme catalyses 4-phospho-D-erythronate + NAD(+) = (R)-3-hydroxy-2-oxo-4-phosphooxybutanoate + NADH + H(+). It functions in the pathway cofactor biosynthesis; pyridoxine 5'-phosphate biosynthesis; pyridoxine 5'-phosphate from D-erythrose 4-phosphate: step 2/5. Functionally, catalyzes the oxidation of erythronate-4-phosphate to 3-hydroxy-2-oxo-4-phosphonooxybutanoate. The chain is Erythronate-4-phosphate dehydrogenase from Proteus mirabilis (strain HI4320).